Here is a 291-residue protein sequence, read N- to C-terminus: 11-beta-hydroxysteroid dehydrogenase 1 (291 aa).

Residues 1 to 7 (MAFMKTH) are Cytoplasmic-facing. A helical; Signal-anchor for type II membrane protein transmembrane segment spans residues 8–24 (LLPILGLFMAYYYYSAY). Residues 25-291 (EEFRPEMLQG…TSYSTDGLIN (267 aa)) are Lumenal-facing. NADP(+)-binding positions include 41-67 (GASK…TARS), 92-93 (TM), and 119-121 (NHI). Asn123 and Asn162 each carry an N-linked (GlcNAc...) asparagine glycan. Ser170 is a binding site for substrate. The active-site Proton acceptor is Tyr183. 183 to 187 (YSASK) contacts NADP(+). A glycan (N-linked (GlcNAc...) asparagine) is linked at Asn207. 218-222 (IDTDT) contacts NADP(+).

The protein belongs to the short-chain dehydrogenases/reductases (SDR) family. As to quaternary structure, homodimer. As to expression, abundantly expressed in the liver, followed by fibroblasts, also detected in the brain, lung, heart, and ovary, and in smaller amounts in kidney, skin, and spleen.

It localises to the endoplasmic reticulum membrane. The catalysed reaction is an 11beta-hydroxysteroid + NADP(+) = an 11-oxosteroid + NADPH + H(+). It carries out the reaction cortisone + NADPH + H(+) = cortisol + NADP(+). The enzyme catalyses corticosterone + NADP(+) = 11-dehydrocorticosterone + NADPH + H(+). It catalyses the reaction a 7beta-hydroxysteroid + NADP(+) = a 7-oxosteroid + NADPH + H(+). The catalysed reaction is 7-oxocholesterol + NADPH + H(+) = 7beta-hydroxycholesterol + NADP(+). It carries out the reaction chenodeoxycholate + NADP(+) = 7-oxolithocholate + NADPH + H(+). The enzyme catalyses 7-oxolithocholate + NADPH + H(+) = ursodeoxycholate + NADP(+). It catalyses the reaction glycochenodeoxycholate + NADP(+) = 7-oxoglycolithocholate + NADPH + H(+). The catalysed reaction is taurochenodeoxycholate + NADP(+) = 7-oxotaurolithocholate + NADPH + H(+). It carries out the reaction tauroursodeoxycholate + NADP(+) = 7-oxotaurolithocholate + NADPH + H(+). The enzyme catalyses glycoursodeoxycholate + NADP(+) = 7-oxoglycolithocholate + NADPH + H(+). It catalyses the reaction 7-oxopregnenolone + NADPH + H(+) = 7beta-hydroxypregnenolone + NADP(+). The catalysed reaction is 3beta,7alpha-dihydroxyandrost-5-en-17-one + NADP(+) = 3beta-hydroxy-5-androstene-7,17-dione + NADPH + H(+). It carries out the reaction 3beta-hydroxy-5-androstene-7,17-dione + NADPH + H(+) = 3beta,7beta-dihydroxyandrost-5-en-17-one + NADP(+). The enzyme catalyses 3beta-hydroxy-5alpha-androstane-7,17-dione + NADPH + H(+) = 3beta,7beta-dihydroxy-5alpha-androstan-17-one + NADP(+). It participates in steroid metabolism. Controls the reversible conversion of biologically active glucocorticoids such as cortisone to cortisol, and 11-dehydrocorticosterone to corticosterone in the presence of NADP(H). Participates in the corticosteroid receptor-mediated anti-inflammatory response, as well as metabolic and homeostatic processes. Bidirectional in vitro, predominantly functions as a reductase in vivo, thereby increasing the concentration of active glucocorticoids. It has broad substrate specificity, besides glucocorticoids, it accepts other steroid and sterol substrates. Interconverts 7-oxo- and 7-hydroxy-neurosteroids such as 7-oxopregnenolone and 7beta-hydroxypregnenolone, 7-oxodehydroepiandrosterone (3beta-hydroxy-5-androstene-7,17-dione) and 7beta-hydroxydehydroepiandrosterone (3beta,7beta-dihydroxyandrost-5-en-17-one), among others. Catalyzes the stereo-specific conversion of the major dietary oxysterol, 7-ketocholesterol (7-oxocholesterol), into the more polar 7-beta-hydroxycholesterol metabolite. 7-oxocholesterol is one of the most important oxysterols, it participates in several events such as induction of apoptosis, accumulation in atherosclerotic lesions, lipid peroxidation, and induction of foam cell formation. Mediates the 7-oxo reduction of 7-oxolithocholate mainly to chenodeoxycholate, and to a lesser extent to ursodeoxycholate, both in its free form and when conjugated to glycine or taurine, providing a link between glucocorticoid activation and bile acid metabolism. Catalyzes the synthesis of 7-beta-25-dihydroxycholesterol from 7-oxo-25-hydroxycholesterol in vitro, which acts as a ligand for the G-protein-coupled receptor (GPCR) Epstein-Barr virus-induced gene 2 (EBI2) and may thereby regulate immune cell migration. The chain is 11-beta-hydroxysteroid dehydrogenase 1 (HSD11B1) from Saimiri sciureus (Common squirrel monkey).